A 725-amino-acid polypeptide reads, in one-letter code: Envelope glycoprotein H (725 aa).

An N-terminal signal peptide occupies residues 1 to 19 (MKLSLILSIALCSTRVVYA). Residues 20–700 (AGAEAPRISR…LVNVRPSMPY (681 aa)) are Virion surface-facing. 2 N-linked (GlcNAc...) asparagine; by host glycosylation sites follow: N38 and N50. Residues 184-247 (TGYTVTVSLA…QTPDHDLLVV (64 aa)) form an interaction with gL region. N319, N459, N621, and N681 each carry an N-linked (GlcNAc...) asparagine; by host glycan. The helical transmembrane segment at 701–721 (SVVVALVIIAILMALGLYRLC) threads the bilayer. Residues 722 to 725 (RQKR) lie on the Intravirion side of the membrane.

It belongs to the herpesviridae glycoprotein H family. In terms of assembly, interacts with glycoprotein L (gL); this interaction is necessary for the correct processing and cell surface expression of gH. The heterodimer gH/gL seems to interact with gB trimers during fusion. In terms of processing, N-glycosylated, O-glycosylated, and sialylated.

It localises to the virion membrane. It is found in the host cell membrane. The protein resides in the host endosome membrane. In terms of biological role, the heterodimer glycoprotein H-glycoprotein L is required for the fusion of viral and plasma membranes leading to virus entry into the host cell. Following initial binding to host receptor, membrane fusion is mediated by the fusion machinery composed of gB and the heterodimer gH/gL. May also be involved in the fusion between the virion envelope and the outer nuclear membrane during virion morphogenesis. The sequence is that of Envelope glycoprotein H from Murid herpesvirus 1 (strain Smith) (MuHV-1).